A 1651-amino-acid polypeptide reads, in one-letter code: A.superbus venom factor 2 (1651 aa).

Residues 1-22 (MEGMALYLVAALLIGFPGSSHG) form the signal peptide. N-linked (GlcNAc...) asparagine glycosylation is present at asparagine 189. Proline 519, aspartate 542, valine 543, and aspartate 545 together coordinate Mg(2+). Intrachain disulfides connect cysteine 547-cysteine 808, cysteine 616-cysteine 651, cysteine 684-cysteine 711, cysteine 685-cysteine 718, cysteine 698-cysteine 719, cysteine 864-cysteine 1501, cysteine 1346-cysteine 1477, cysteine 1377-cysteine 1446, cysteine 1494-cysteine 1499, cysteine 1506-cysteine 1578, cysteine 1525-cysteine 1649, and cysteine 1625-cysteine 1634. Positions 657–739 (RRRRSSVLLL…QRESELFLAR (83 aa)) are excised as a propeptide. A C3a-like domain region spans residues 661–739 (SSVLLLDSKA…QRESELFLAR (79 aa)). The Anaphylatoxin-like domain maps to 684 to 719 (CCEDGMHENPMGYTCEKRAKYTQEGDACKAAFLECC). The tract at residues 743 to 754 (EDEFFEEDNIIS) is factor B binding site. Positions 992 to 1269 (HLIITPSGSG…VMVFQALAEY (278 aa)) are excised as a propeptide. The interval 992-1269 (HLIITPSGSG…VMVFQALAEY (278 aa)) is C3d-like domain. The segment at 1197 to 1259 (VLMAASTGRD…GGTYGQTQAT (63 aa)) is factor H binding site. N-linked (GlcNAc...) asparagine glycosylation is found at asparagine 1282 and asparagine 1352. Positions 1506–1649 (CSLLNQQKKI…LSNTLTIFGC (144 aa)) constitute an NTR domain.

This sequence belongs to the venom complement C3 homolog family. In terms of assembly, heterotrimer of alpha, beta and gamma chains; disulfide-linked. Is active with factor B in the presence of factor D. First processed by the removal of 4 Arg residues by furin-type protease, forming two chains, alpha and gamma/beta precursor, linked by a disulfide bond. This mature AVF is composed of three chains: alpha, gamma and beta. As to expression, expressed by the venom gland.

It is found in the secreted. Its function is as follows. Complement-activating protein in snake venom. It is a structural and functional analog of complement component C3b, the activated form of C3. It binds factor B (CFB), which is subsequently cleaved by factor D (CFD) to form the bimolecular complex AVF/Bb. AVF/Bb is a C3 convertase that cleaves complement component C3, but not C5 (as do CVF/Bb). The polypeptide is A.superbus venom factor 2 (Austrelaps superbus (Lowland copperhead snake)).